Here is a 148-residue protein sequence, read N- to C-terminus: UPF0179 protein Ta1159 (148 aa).

The protein belongs to the UPF0179 family.

This Thermoplasma acidophilum (strain ATCC 25905 / DSM 1728 / JCM 9062 / NBRC 15155 / AMRC-C165) protein is UPF0179 protein Ta1159.